The sequence spans 498 residues: Actin-binding protein WASF2 (498 aa).

Disordered regions lie at residues 173–203 (KEKRKHRKEKKDNPNRGNVNPRKIKTRKEEW) and 240–435 (NVDA…AVSD). The span at 252-263 (SDSASSPSPSFS) shows a compositional bias: low complexity. Residues 298-407 (SHPPPAPPLG…PPPGPPPPPF (110 aa)) are compositionally biased toward pro residues. One can recognise a WH2 domain in the interval 436–453 (ARSDLLSAIRQGFQLRRV). At S474 the chain carries Phosphoserine.

This sequence belongs to the SCAR/WAVE family. As to quaternary structure, binds actin and the Arp2/3 complex. Interacts with BAIAP2. Component of the WAVE2 complex composed of ABI1, CYFIP1/SRA1, NCKAP1/NAP1 (NCKAP1l/HEM1 in hematopoietic cells) and WASF2/WAVE2. Directly interacts with BRK1. Interacts with FNBP1L (via the SH3 domain). In terms of assembly, (Microbial infection) Interacts with human cytomegalovirus protein UL135. In terms of tissue distribution, expressed in all tissues with strongest expression in placenta, lung, and peripheral blood leukocytes, but not in skeletal muscle.

Its subcellular location is the cytoplasm. The protein resides in the cytoskeleton. The protein localises to the cell projection. It is found in the lamellipodium. It localises to the basolateral cell membrane. Downstream effector molecule involved in the transmission of signals from tyrosine kinase receptors and small GTPases to the actin cytoskeleton. Promotes formation of actin filaments. Part of the WAVE complex that regulates lamellipodia formation. The WAVE complex regulates actin filament reorganization via its interaction with the Arp2/3 complex. The sequence is that of Actin-binding protein WASF2 from Homo sapiens (Human).